The following is a 326-amino-acid chain: Biotin synthase (326 aa).

One can recognise a Radical SAM core domain in the interval 41–271 (YHVQLASLLS…EARVRLSAGR (231 aa)). Positions 56, 60, and 63 each coordinate [4Fe-4S] cluster. Cysteine 102, cysteine 134, cysteine 194, and arginine 266 together coordinate [2Fe-2S] cluster.

It belongs to the radical SAM superfamily. Biotin synthase family. In terms of assembly, homodimer. It depends on [4Fe-4S] cluster as a cofactor. Requires [2Fe-2S] cluster as cofactor.

It catalyses the reaction (4R,5S)-dethiobiotin + (sulfur carrier)-SH + 2 reduced [2Fe-2S]-[ferredoxin] + 2 S-adenosyl-L-methionine = (sulfur carrier)-H + biotin + 2 5'-deoxyadenosine + 2 L-methionine + 2 oxidized [2Fe-2S]-[ferredoxin]. Its pathway is cofactor biosynthesis; biotin biosynthesis; biotin from 7,8-diaminononanoate: step 2/2. Catalyzes the conversion of dethiobiotin (DTB) to biotin by the insertion of a sulfur atom into dethiobiotin via a radical-based mechanism. This Synechococcus sp. (strain RCC307) protein is Biotin synthase.